Reading from the N-terminus, the 60-residue chain is Large ribosomal subunit protein uL30 (60 aa).

It belongs to the universal ribosomal protein uL30 family. As to quaternary structure, part of the 50S ribosomal subunit.

This is Large ribosomal subunit protein uL30 from Azoarcus sp. (strain BH72).